Reading from the N-terminus, the 160-residue chain is Transcriptional repressor NrdR (160 aa).

Residues 1-11 (MRCPNCNSLDT) are compositionally biased toward polar residues. The segment at 1–20 (MRCPNCNSLDTQVKDSRPTE) is disordered. Residues 3–34 (CPNCNSLDTQVKDSRPTEDSSVIRRRRVCVAC) fold into a zinc finger. One can recognise an ATP-cone domain in the interval 49-139 (LTVIKRNGRR…VYRNFREAKD (91 aa)).

This sequence belongs to the NrdR family. Requires Zn(2+) as cofactor.

Functionally, negatively regulates transcription of bacterial ribonucleotide reductase nrd genes and operons by binding to NrdR-boxes. This Bradyrhizobium diazoefficiens (strain JCM 10833 / BCRC 13528 / IAM 13628 / NBRC 14792 / USDA 110) protein is Transcriptional repressor NrdR.